Consider the following 239-residue polypeptide: Ribose-5-phosphate isomerase A (239 aa).

Substrate contacts are provided by residues serine 39–threonine 42, aspartate 95–aspartate 98, and lysine 108–glycine 111. The active-site Proton acceptor is glutamate 117. Lysine 135 serves as a coordination point for substrate.

This sequence belongs to the ribose 5-phosphate isomerase family. As to quaternary structure, homodimer.

The enzyme catalyses aldehydo-D-ribose 5-phosphate = D-ribulose 5-phosphate. It functions in the pathway carbohydrate degradation; pentose phosphate pathway; D-ribose 5-phosphate from D-ribulose 5-phosphate (non-oxidative stage): step 1/1. Functionally, catalyzes the reversible conversion of ribose-5-phosphate to ribulose 5-phosphate. The chain is Ribose-5-phosphate isomerase A from Chlamydia muridarum (strain MoPn / Nigg).